The sequence spans 114 residues: Cytochrome c oxidase subunit 7A2-like, mitochondrial (114 aa).

Residues 1–55 (MYYKFSGFTQKLAGAWASEAYSPQGLKPVVSTEAPPIIFATPTKLTSDSTVYDYA) constitute a mitochondrion transit peptide. An N6-acetyllysine modification is found at lysine 69. A helical membrane pass occupies residues 82–107 (PDQMLYRTTMALTVGGTIYCLIALYM).

This sequence belongs to the cytochrome c oxidase VIIa family. As to quaternary structure, interacts with the mitochondrial respiratory complexes III (CIII) and IV (CIV), promoting their association.

The protein resides in the mitochondrion inner membrane. Functionally, assembly factor that mediates the formation of some mitochondrial respiratory supercomplexes (respirasomes), thereby promoting oxidative phosphorylation and energy metabolism. Acts as a molecular adapter that associates with both mitochondrial respiratory complexes III (CIII) and IV (CIV), promoting their association. Mediates the formation of various mitochondrial respiratory supercomplexes, such as MCIII(2)IV(2), composed of two CIII and two CIV, and the CS-respirasome (MCI(1)III(2)IV(2)), composed of one CI, two CIII and two CIV. Not involved in the formation of the canonical respirasome (MCI(1)III(2)IV(1)), composed of one CI, two CIII and one CIV. The formation of different respirasomes is important for cell adaptation to oxygen conditions and prevent metabolic exhaustion: supercomplexes mediated by COX7A2L/SCAF1 are required to maintain oxidative phosphorylation upon low oxygen conditions and promote metabolic rewiring toward glycolysis. The sequence is that of Cytochrome c oxidase subunit 7A2-like, mitochondrial from Homo sapiens (Human).